The primary structure comprises 1076 residues: Regulator of G-protein signaling protein-like (1076 aa).

In terms of domain architecture, RGS spans 645 to 764; it reads NLTEVLLNTQ…LFPPHHQEVE (120 aa). Over residues 834-852 the composition is skewed to polar residues; it reads TTAHNTSGRSAPPSTNVRS. Residues 834–854 form a disordered region; it reads TTAHNTSGRSAPPSTNVRSAD. Residues 960–982 traverse the membrane as a helical segment; the sequence is VFHGAIMSVFPVVMYFWKRFCFW.

The protein localises to the membrane. The chain is Regulator of G-protein signaling protein-like (RGSL1) from Homo sapiens (Human).